Consider the following 512-residue polypeptide: 23S rRNA (uracil(1939)-C(5))-methyltransferase RlmD (512 aa).

Residues 1–14 (MQPTDSKTSTSDTT) show a composition bias toward low complexity. Residues 1–45 (MQPTDSKTSTSDTTEQPNETQTITIPPSKKKSKPSSKTRRRLKDA) form a disordered region. Positions 15–25 (EQPNETQTITI) are enriched in polar residues. The segment covering 28–42 (SKKKSKPSSKTRRRL) has biased composition (basic residues). A TRAM domain is found at 41–113 (RLKDAEPLPF…TSFEEGDAVN (73 aa)). Residues cysteine 127, cysteine 133, cysteine 136, and cysteine 215 each coordinate [4Fe-4S] cluster. Residues glutamine 340, phenylalanine 369, asparagine 374, glutamate 393, aspartate 420, and aspartate 441 each coordinate S-adenosyl-L-methionine. Cysteine 467 functions as the Nucleophile in the catalytic mechanism.

The protein belongs to the class I-like SAM-binding methyltransferase superfamily. RNA M5U methyltransferase family. RlmD subfamily.

It carries out the reaction uridine(1939) in 23S rRNA + S-adenosyl-L-methionine = 5-methyluridine(1939) in 23S rRNA + S-adenosyl-L-homocysteine + H(+). Catalyzes the formation of 5-methyl-uridine at position 1939 (m5U1939) in 23S rRNA. The polypeptide is 23S rRNA (uracil(1939)-C(5))-methyltransferase RlmD (Psychrobacter arcticus (strain DSM 17307 / VKM B-2377 / 273-4)).